We begin with the raw amino-acid sequence, 259 residues long: Protein YIF1B (259 aa).

Residue methionine 1 is modified to N-acetylmethionine. Residues 1–61 (MHATGLAAPA…QPSPGSLGYP (61 aa)) form a disordered region. At 9–153 (PAGTPRLRKW…APRFDINAPD (145 aa)) the chain is on the cytoplasmic side. At threonine 12 the chain carries Phosphothreonine. Residues 14 to 24 (RLRKWPSKRRV) are compositionally biased toward basic residues. Residue serine 64 is modified to Phosphoserine. Residues 154 to 174 (LYIPAMAFITYILVAGLALGT) traverse the membrane as a helical segment. Residues 175-186 (QDRMIGGVLTGL) lie on the Extracellular side of the membrane. Residues 187–207 (LFGKIGYYLVLAWCCVSIFVF) form a helical membrane-spanning segment. Residues 208 to 237 (MIRTLRLKILAQAAAEGVPVRGARNQLRMY) lie on the Cytoplasmic side of the membrane. A helical membrane pass occupies residues 238 to 258 (LTMAVAAAQPVLMYWLTFHLV). Arginine 259 is a topological domain (extracellular).

This sequence belongs to the YIF1 family. In terms of assembly, interacts with HTR1A (via C-terminus). Interacts with ABCB9 (via TMD0); this interaction allows (but is not essential) the ER-to-Golgi trafficking and strongly depends on a salt bridge within TMD0. Highly expressed in brain. Expressed in heart, kidney, and lung and lower levels in spleen, muscle, and intestine (at protein level). Expressed in serotoninergic neurons (at protein level).

It is found in the endoplasmic reticulum membrane. Its subcellular location is the golgi apparatus membrane. The protein resides in the endoplasmic reticulum-Golgi intermediate compartment membrane. Functionally, functions in endoplasmic reticulum to Golgi vesicle-mediated transport and regulates the proper organization of the endoplasmic reticulum and the Golgi. Plays a key role in targeting to neuronal dendrites receptors such as HTR1A. Plays also a role in primary cilium and sperm flagellum assembly probably through protein transport to these compartments. The chain is Protein YIF1B from Rattus norvegicus (Rat).